Reading from the N-terminus, the 253-residue chain is NAD-dependent protein deacylase 2 (253 aa).

One can recognise a Deacetylase sirtuin-type domain in the interval 1–252 (MEDEIRKAAE…VEEVKRLRSE (252 aa)). NAD(+)-binding positions include 23–42 (GAGI…DGLW) and 100–103 (QNID). The active-site Proton acceptor is histidine 118. The Zn(2+) site is built by cysteine 126, cysteine 129, cysteine 150, and cysteine 153. NAD(+)-binding positions include 191–193 (GSS), 217–219 (NAE), and alanine 235.

It belongs to the sirtuin family. Class III subfamily. The cofactor is Zn(2+).

Its subcellular location is the cytoplasm. It carries out the reaction N(6)-acetyl-L-lysyl-[protein] + NAD(+) + H2O = 2''-O-acetyl-ADP-D-ribose + nicotinamide + L-lysyl-[protein]. Its function is as follows. NAD-dependent protein deacetylase which modulates the activities of several proteins which are inactive in their acetylated form. Deacetylates the N-terminal lysine residue of Alba, the major archaeal chromatin protein and that, in turn, increases Alba's DNA binding affinity, thereby repressing transcription. This is NAD-dependent protein deacylase 2 from Archaeoglobus fulgidus (strain ATCC 49558 / DSM 4304 / JCM 9628 / NBRC 100126 / VC-16).